A 524-amino-acid polypeptide reads, in one-letter code: Solute carrier family 35 member F5 (524 aa).

2 helical membrane-spanning segments follow: residues 69 to 89 and 101 to 121; these read MALG…SSEL and FFST…FIIW. The residue at position 207 (Ser-207) is a Phosphoserine. Helical transmembrane passes span 244-264, 269-289, 297-317, 328-348, 362-382, 396-416, 421-441, and 453-473; these read ISFF…EALS, AIVN…AAVF, FTLS…LVNL, TIGS…IVMI, MFFG…FFLL, VVLL…EFLW, FLTS…LSII, and WLFF…TLLC. The EamA domain maps to 253 to 317; sequence FLANLSYQEA…SIGGVVLVNL (65 aa).

It belongs to the SLC35F solute transporter family.

The protein localises to the membrane. Functionally, putative solute transporter. The sequence is that of Solute carrier family 35 member F5 (Slc35f5) from Mus musculus (Mouse).